The chain runs to 208 residues: Imidazole glycerol phosphate synthase subunit HisH (208 aa).

The region spanning 1 to 206 (MFAIVDYDTG…KEMVSANDFS (206 aa)) is the Glutamine amidotransferase type-1 domain. The active-site Nucleophile is Cys-79. Catalysis depends on residues His-181 and Glu-183.

In terms of assembly, heterodimer of HisH and HisF.

It is found in the cytoplasm. The enzyme catalyses 5-[(5-phospho-1-deoxy-D-ribulos-1-ylimino)methylamino]-1-(5-phospho-beta-D-ribosyl)imidazole-4-carboxamide + L-glutamine = D-erythro-1-(imidazol-4-yl)glycerol 3-phosphate + 5-amino-1-(5-phospho-beta-D-ribosyl)imidazole-4-carboxamide + L-glutamate + H(+). The catalysed reaction is L-glutamine + H2O = L-glutamate + NH4(+). It participates in amino-acid biosynthesis; L-histidine biosynthesis; L-histidine from 5-phospho-alpha-D-ribose 1-diphosphate: step 5/9. Its function is as follows. IGPS catalyzes the conversion of PRFAR and glutamine to IGP, AICAR and glutamate. The HisH subunit catalyzes the hydrolysis of glutamine to glutamate and ammonia as part of the synthesis of IGP and AICAR. The resulting ammonia molecule is channeled to the active site of HisF. This is Imidazole glycerol phosphate synthase subunit HisH from Lactiplantibacillus plantarum (strain ATCC BAA-793 / NCIMB 8826 / WCFS1) (Lactobacillus plantarum).